The following is a 295-amino-acid chain: Phosphoenolpyruvate phosphomutase (295 aa).

The active-site Nucleophile is the D58. A Mg(2+)-binding site is contributed by D58.

Belongs to the isocitrate lyase/PEP mutase superfamily. PEP mutase family. As to quaternary structure, homotetramer. Mg(2+) is required as a cofactor.

It catalyses the reaction phosphoenolpyruvate + H(+) = 3-phosphonopyruvate. It functions in the pathway phosphorus metabolism; phosphonate biosynthesis. Functionally, formation of a carbon-phosphorus bond by converting phosphoenolpyruvate (PEP) to phosphonopyruvate (P-Pyr). This chain is Phosphoenolpyruvate phosphomutase, found in Mytilus edulis (Blue mussel).